The primary structure comprises 213 residues: Heat shock protein 30C (213 aa).

Over residues 61–80 the composition is skewed to basic and acidic residues; sequence SKDTEMRRITDQNRQSRESE. Disordered regions lie at residues 61–93 and 174–213; these read SKDT…GKDH and ALPP…QKVD. The 113-residue stretch at 76–188 folds into the sHSP domain; that stretch reads SRESEGTSPN…PETPIPISMD (113 aa).

The protein belongs to the small heat shock protein (HSP20) family.

This Xenopus laevis (African clawed frog) protein is Heat shock protein 30C (hsp30c).